Consider the following 408-residue polypeptide: Guanine nucleotide-binding protein alpha-14 subunit (408 aa).

Residues 39 to 46 (HSEELEAK), 79 to 86 (GGPLSGKS), 201 to 205 (TRIAD), 216 to 222 (VHSRKAT), 241 to 245 (DVGGQ), 285 to 288 (FPKF), 325 to 328 (NKVD), and alanine 380 contribute to the GTP site. Residues 71–408 (SHIKILILGG…KANAKATGLS (338 aa)) form the G-alpha domain. The G1 motif stretch occupies residues 74–87 (KILILGGPLSGKST). Serine 86 is a Mg(2+) binding site. Positions 214–222 (DIVHSRKAT) are G2 motif. Threonine 222 is a Mg(2+) binding site. The segment at 237–246 (LLMIDVGGQR) is G3 motif. Residues 321-328 (LLFFNKVD) form a G4 motif region. The segment at 378–383 (TTATNT) is G5 motif.

Belongs to the G-alpha family. As to quaternary structure, g proteins are composed of 3 units; alpha, beta and gamma. The alpha chain contains the guanine nucleotide binding site. Interacts with the dopamine receptor dop-2 (via C-terminus); the interaction is direct.

Functionally, guanine nucleotide-binding proteins (G proteins) are involved as modulators or transducers in various transmembrane signaling systems. In association with the G-protein coupled dopamine receptor dop-2, modulates two types of learning: touch habituation and chemosensory associative conditioning. The sequence is that of Guanine nucleotide-binding protein alpha-14 subunit from Caenorhabditis elegans.